A 199-amino-acid polypeptide reads, in one-letter code: Pneumococcal vaccine antigen A homolog (199 aa).

The protein resides in the cell surface. The polypeptide is Pneumococcal vaccine antigen A homolog (pvaA) (Streptococcus pyogenes serotype M18 (strain MGAS8232)).